Consider the following 241-residue polypeptide: MATVSMRDMLQAGVHFGHQTRYWNPKMKPFIFGARNKVHIINLEKTVPMFNEALAELSKISSRKGKILFVGTKRAASEAVKEHALSCDQFFVNHRWLGGMLTNWKTVRQSIKRLKDLEIQSQDGTFDKLTKKEALMRTRELSKLENSLGGIKDMGGLPDALFVVDADHEHIAIKEANNLGIPVFSIVDTNSDPDGVDFIIPGNDDAIRAVSLYLTAVAATVREGRSQDLAQQAEETFAEAE.

The protein belongs to the universal ribosomal protein uS2 family.

The protein is Small ribosomal subunit protein uS2 of Erwinia tasmaniensis (strain DSM 17950 / CFBP 7177 / CIP 109463 / NCPPB 4357 / Et1/99).